The primary structure comprises 139 residues: Holo-[acyl-carrier-protein] synthase (139 aa).

Positions 8 and 57 each coordinate Mg(2+).

The protein belongs to the P-Pant transferase superfamily. AcpS family. The cofactor is Mg(2+).

It localises to the cytoplasm. The enzyme catalyses apo-[ACP] + CoA = holo-[ACP] + adenosine 3',5'-bisphosphate + H(+). Functionally, transfers the 4'-phosphopantetheine moiety from coenzyme A to a Ser of acyl-carrier-protein. In Sinorhizobium fredii (strain NBRC 101917 / NGR234), this protein is Holo-[acyl-carrier-protein] synthase.